Here is a 177-residue protein sequence, read N- to C-terminus: SKP1-like protein 15 (177 aa).

Residues 108–167 (ILAANYLNVEGLLGLTCQTVADYIKDKTPEEVRELFNIENDFTHEEEEEAIRKENAWAFE) are interaction with the F-box domain of F-box proteins.

It belongs to the SKP1 family. As to quaternary structure, part of a SCF (SKP1-cullin-F-box) protein ligase complex. In terms of tissue distribution, expressed at low levels in seedlings and leaves.

It localises to the nucleus. The protein operates within protein modification; protein ubiquitination. In terms of biological role, involved in ubiquitination and subsequent proteasomal degradation of target proteins. Together with CUL1, RBX1 and a F-box protein, it forms a SCF E3 ubiquitin ligase complex. The functional specificity of this complex depends on the type of F-box protein. In the SCF complex, it serves as an adapter that links the F-box protein to CUL1. The chain is SKP1-like protein 15 (ASK15) from Arabidopsis thaliana (Mouse-ear cress).